We begin with the raw amino-acid sequence, 163 residues long: Phosphopantetheine adenylyltransferase (163 aa).

Residue Thr-11 participates in substrate binding. ATP contacts are provided by residues Thr-11–Phe-12 and His-19. Lys-43, Leu-75, and Arg-89 together coordinate substrate. Residues Gly-90 to Arg-92, Glu-100, and Tyr-125 to Thr-131 contribute to the ATP site.

This sequence belongs to the bacterial CoaD family. Homohexamer. Requires Mg(2+) as cofactor.

It localises to the cytoplasm. The enzyme catalyses (R)-4'-phosphopantetheine + ATP + H(+) = 3'-dephospho-CoA + diphosphate. Its pathway is cofactor biosynthesis; coenzyme A biosynthesis; CoA from (R)-pantothenate: step 4/5. Functionally, reversibly transfers an adenylyl group from ATP to 4'-phosphopantetheine, yielding dephospho-CoA (dPCoA) and pyrophosphate. The sequence is that of Phosphopantetheine adenylyltransferase from Acinetobacter baumannii (strain SDF).